The primary structure comprises 716 residues: MSPDAIRVVVCGDDAVGKSSLITSLIKETIIEPQTNNVLPPITISRNDYIESSQEYLNDQDHHHHHQSSPSTMKNKRKHNNKRERERERESSINNVQPNEISEYIPNITTIIDTSSSDMTNLQKELKRADVIWLVYSDHYTYERISLHWMPLFRSMGVNLPIILCANKSDLFPKSKSNLKSTNSDEFVPLINEFKEIEAGVRCSAKNNYNVVEAFYLCQRAVTHPISPIFDAKEGNLKPGAIKPLKRIFWLSDTDQDGYLNFEELSELHKKCFGIEASKSDYEEIVNLIDQKILPSYNTTIETQTPPQQQHLATSAGTPNGTTTTTSKGISEDGFILLNKIYAESGRHETVWCILRAYHYTNSLSLSDKFLYPRLDVNPHSSVELSPTGYKFFVDLFIKFDKDNDGGLNEDELNTLFRSTPGIPKLWVESNFPSSIVCNEEGYVTLQGWLAQWNLTTFLSYKTTLEYLAYLGFDEGNSTKALKVTKPRKIRQKNGKTYRNAVNDRNVFNCFIVGAPKAGKSSLLESFLHGSYSDIYSPTIQPRLVVKDIELRGGKQCYLILEELGELEPAILENKSRLDQCDVICYAYDSSDPESFQYLVELREKHGHLLDEVPAVFVALKADLDKQQQRCDVQPENYTRDLFLNSPLHVSLAWNSSLHEMFIQLVDAAKTPSSATPGIELEVSVDQDDIKHIIMTGAAIAVVGLVSIWVLNSLRR.

Residues 1–692 (MSPDAIRVVV…VSVDQDDIKH (692 aa)) lie on the Cytoplasmic side of the membrane. A Miro 1 domain is found at 3–224 (PDAIRVVVCG…FYLCQRAVTH (222 aa)). A disordered region spans residues 58 to 99 (NDQDHHHHHQSSPSTMKNKRKHNNKRERERERESSINNVQPN). Residues 84–91 (ERERERES), 113–115 (DTS), and 167–170 (NKSD) each bind GTP. The EF-hand 1 domain occupies 240 to 275 (GAIKPLKRIFWLSDTDQDGYLNFEELSELHKKCFGI). Residues Asp253, Asp255, Asp257, Tyr259, and Glu264 each coordinate Ca(2+). A disordered region spans residues 303-327 (TQTPPQQQHLATSAGTPNGTTTTTS). One can recognise an EF-hand 2 domain in the interval 388–423 (TGYKFFVDLFIKFDKDNDGGLNEDELNTLFRSTPGI). Ca(2+)-binding residues include Asp401, Asp403, Asp405, and Glu412. A Miro 2 domain is found at 505 to 671 (RNVFNCFIVG…FIQLVDAAKT (167 aa)). GTP is bound by residues 514–521 (GAPKAGKS), 550–554 (ELRGG), and 620–623 (LKAD). A helical; Anchor for type IV membrane protein transmembrane segment spans residues 693–713 (IIMTGAAIAVVGLVSIWVLNS). The Mitochondrial intermembrane portion of the chain corresponds to 714–716 (LRR).

Belongs to the mitochondrial Rho GTPase family.

It localises to the mitochondrion outer membrane. In terms of biological role, mitochondrial GTPase involved in mitochondrial trafficking. Probably involved in control of anterograde transport of mitochondria and their subcellular distribution. This Candida albicans (strain SC5314 / ATCC MYA-2876) (Yeast) protein is Mitochondrial Rho GTPase 1 (GEM1).